An 860-amino-acid chain; its full sequence is Leucine--tRNA ligase (860 aa).

The 'HIGH' region signature appears at 42–52 (PYPSGRLHMGH). The 'KMSKS' region signature appears at 619 to 623 (KMSKS). Lys-622 provides a ligand contact to ATP.

It belongs to the class-I aminoacyl-tRNA synthetase family.

It is found in the cytoplasm. It carries out the reaction tRNA(Leu) + L-leucine + ATP = L-leucyl-tRNA(Leu) + AMP + diphosphate. This Escherichia coli (strain K12 / MC4100 / BW2952) protein is Leucine--tRNA ligase.